Consider the following 488-residue polypeptide: Inosine-5'-monophosphate dehydrogenase (488 aa).

CBS domains follow at residues 95-153 (VISN…SIKI) and 157-216 (MTQE…AKDE). NAD(+) is bound by residues D250 and 300–302 (GIG). K(+) contacts are provided by G302 and G304. S305 contacts IMP. C307 is a binding site for K(+). C307 acts as the Thioimidate intermediate in catalysis. IMP-binding positions include 340–342 (DGG), 363–364 (GS), and 387–391 (YRGMG). R403 serves as the catalytic Proton acceptor. Residue E417 coordinates IMP. The tract at residues 468–488 (GLAESHPHNIQITKESPNYSF) is disordered. The K(+) site is built by E471, S472, and H473. Polar residues predominate over residues 475–488 (HNIQITKESPNYSF).

It belongs to the IMPDH/GMPR family. In terms of assembly, homotetramer. K(+) serves as cofactor.

The enzyme catalyses IMP + NAD(+) + H2O = XMP + NADH + H(+). Its pathway is purine metabolism; XMP biosynthesis via de novo pathway; XMP from IMP: step 1/1. With respect to regulation, mycophenolic acid (MPA) is a non-competitive inhibitor that prevents formation of the closed enzyme conformation by binding to the same site as the amobile flap. In contrast, mizoribine monophosphate (MZP) is a competitive inhibitor that induces the closed conformation. MPA is a potent inhibitor of mammalian IMPDHs but a poor inhibitor of the bacterial enzymes. MZP is a more potent inhibitor of bacterial IMPDH. Its function is as follows. Catalyzes the conversion of inosine 5'-phosphate (IMP) to xanthosine 5'-phosphate (XMP), the first committed and rate-limiting step in the de novo synthesis of guanine nucleotides, and therefore plays an important role in the regulation of cell growth. The polypeptide is Inosine-5'-monophosphate dehydrogenase (Staphylococcus aureus (strain Mu50 / ATCC 700699)).